The sequence spans 266 residues: MGNIEAFKALFLGFIEGLTEFLPISSTGHLILFGHLIDFHSDSGRAFEVVIQLGAILAVCWLYRKKIIDLVQGFFSGDQEARHFTFSVLMAFFPAVIIGVLAVDFIKSVLFSPLVVAIALIIGGLIIFWVESRDFKPSTTEATKITFKQAIAVGFIQCLAMIPGTSRSGATIIGGMLSGLSRKAATEFSFFLAMPTMLGAATYDLLRNADVLTSDNMLNIGLGFITAFISALFVVKALVRFVEKHTLRVFAWYRIVLGIIIMFVML.

8 consecutive transmembrane segments (helical) span residues 4–24 (IEAF…FLPI), 43–63 (SGRA…CWLY), 86–106 (FSVL…VDFI), 109–129 (VLFS…IIFW), 145–165 (ITFK…IPGT), 186–206 (TEFS…YDLL), 219–239 (NIGL…KALV), and 246–266 (TLRV…FVML).

The protein belongs to the UppP family.

It is found in the cell inner membrane. The catalysed reaction is di-trans,octa-cis-undecaprenyl diphosphate + H2O = di-trans,octa-cis-undecaprenyl phosphate + phosphate + H(+). Catalyzes the dephosphorylation of undecaprenyl diphosphate (UPP). Confers resistance to bacitracin. This Acinetobacter baylyi (strain ATCC 33305 / BD413 / ADP1) protein is Undecaprenyl-diphosphatase 3.